The following is a 260-amino-acid chain: MASSVPAPSGSVITVASSSSSAAAAAVCGTGSPCAACKFLRRKCQPDCVFAPYFPPDNPQKFVHVHRVFGASNVTKLLNELHPFQREDAVNSLAYEADMRLRDPVYGCVGVISILQHNLRQLQQDLARAKYELSKYQAAAAASASTAPTGPQAMAEFIGNAMPNGAHNFINIGHSAALGSLGGSASVFGQEQFGNAQMLSRSYDGGEPIARLGINGGGYEFGYSTAMGGSGAVSGLGTLGISPFLKSGTAGGDEKPNGGQ.

Positions 32–133 (SPCAACKFLR…QDLARAKYEL (102 aa)) constitute an LOB domain.

The protein belongs to the LOB domain-containing protein family. As to quaternary structure, interacts with RS2. As to expression, expressed in leaves, leaf primordia, immature ears, immature tassels, whole ovules, silk and husk leaves. Found on the adaxial side of organs.

The protein localises to the nucleus. Functionally, promotes the switch from proliferation to differentiation in the embryo sac. Negative regulator of cell proliferation in the adaxial side of leaves. Regulates the formation of a symmetric lamina and the establishment of venation. Interacts directly with RS2 (rough sheath 2) to repress some knox homeobox genes. This chain is LOB domain-containing protein 6 (LBD6), found in Zea mays (Maize).